The chain runs to 554 residues: Membrane protein insertase YidC (554 aa).

5 helical membrane-spanning segments follow: residues 7 to 24, 362 to 382, 436 to 456, 475 to 495, and 510 to 530; these read VLWV…DNWQ, VVGN…AVFF, LPVV…LASV, PFFI…SLNP, and PIAF…YYVV.

The protein belongs to the OXA1/ALB3/YidC family. Type 1 subfamily. In terms of assembly, interacts with the Sec translocase complex via SecD. Specifically interacts with transmembrane segments of nascent integral membrane proteins during membrane integration.

The protein localises to the cell inner membrane. Its function is as follows. Required for the insertion and/or proper folding and/or complex formation of integral membrane proteins into the membrane. Involved in integration of membrane proteins that insert both dependently and independently of the Sec translocase complex, as well as at least some lipoproteins. Aids folding of multispanning membrane proteins. The protein is Membrane protein insertase YidC of Burkholderia vietnamiensis (strain G4 / LMG 22486) (Burkholderia cepacia (strain R1808)).